Consider the following 867-residue polypeptide: Putative ubiquitin thioesterase L96 (867 aa).

Disordered regions lie at residues 49 to 73 (VNQY…GKQD), 177 to 204 (IKSV…MKKK), 231 to 271 (YILS…PKYR), and 379 to 591 (LSTQ…YKGG). Basic residues-rich tracts occupy residues 234–258 (SRKK…RSPG) and 421–430 (KITRKPKSPR). Composition is skewed to low complexity over residues 433 to 462 (PPAS…SVRA) and 472 to 551 (PPSS…KSPS). The span at 565–575 (ITVDPSVTPPS) shows a compositional bias: polar residues. Basic and acidic residues predominate over residues 582–591 (RPELPEYKGG). Positions 606-745 (YKVIPVKGDG…DYHYTALTPL (140 aa)) constitute an OTU domain. Residue D614 is part of the active site. The Nucleophile role is filled by C617. Residue H738 is part of the active site.

It carries out the reaction Thiol-dependent hydrolysis of ester, thioester, amide, peptide and isopeptide bonds formed by the C-terminal Gly of ubiquitin (a 76-residue protein attached to proteins as an intracellular targeting signal).. Hydrolase that can remove conjugated ubiquitin from proteins and may therefore play an important regulatory role at the level of protein turnover by preventing degradation. May be involved in TIV genomic DNA packaging in a manner related to the Gag polyproteins of the mammalian viruses. The sequence is that of Putative ubiquitin thioesterase L96 from Tipula iridescent virus (TIV).